We begin with the raw amino-acid sequence, 830 residues long: WD repeat-containing protein 75 (830 aa).

9 WD repeats span residues 4 to 43, 47 to 86, 90 to 131, 145 to 184, 193 to 231, 237 to 276, 279 to 318, 324 to 362, and 376 to 423; these read EENI…KVYS, EECV…KLWD, GILI…QLVS, KELS…YFFK, LSSS…RLWR, KKYT…VEWR, TEKN…IIIH, SAVI…QFYS, and QQEY…KLWM. A Glycyl lysine isopeptide (Lys-Gly) (interchain with G-Cter in SUMO2) cross-link involves residue lysine 123. A Glycyl lysine isopeptide (Lys-Gly) (interchain with G-Cter in SUMO2) cross-link involves residue lysine 427. 4 WD repeats span residues 430–474, 487–525, 529–569, and 574–611; these read GFIL…KVWI, GWTC…TIWD, WELK…CCWN, and ALEW…FVFK. Lysine 466 carries the N6-acetyllysine modification. Phosphoserine occurs at positions 664 and 672. Residue lysine 676 forms a Glycyl lysine isopeptide (Lys-Gly) (interchain with G-Cter in SUMO2) linkage. Positions 763-806 are disordered; it reads SAKEIPEDVDMEEEKESEDSDEENDFTEKVQDTSNTGLGEDIIH. A compositionally biased stretch (acidic residues) spans 769-787; the sequence is EDVDMEEEKESEDSDEEND. Serine 779, serine 782, serine 796, and serine 811 each carry phosphoserine.

Component of the proposed t-UTP subcomplex of the ribosomal small subunit (SSU) processome. SSU processome is composed of more than 70 proteins and the RNA chaperone small nucleolar RNA (snoRNA) U3.

Its subcellular location is the nucleus. The protein localises to the nucleolus. In terms of biological role, ribosome biogenesis factor. Part of the small subunit (SSU) processome, first precursor of the small eukaryotic ribosomal subunit. During the assembly of the SSU processome in the nucleolus, many ribosome biogenesis factors, an RNA chaperone and ribosomal proteins associate with the nascent pre-rRNA and work in concert to generate RNA folding, modifications, rearrangements and cleavage as well as targeted degradation of pre-ribosomal RNA by the RNA exosome. Involved in nucleolar processing of pre-18S ribosomal RNA. Required for optimal pre-ribosomal RNA transcription by RNA polymerase I. This chain is WD repeat-containing protein 75, found in Homo sapiens (Human).